We begin with the raw amino-acid sequence, 773 residues long: Acyl-homoserine lactone acylase PvdQ (773 aa).

A signal peptide spans 1–23 (MSRALPGFLFAGLSVAVVLPAQA). The propeptide at 200 to 221 (SQQVQALQLAAARNERFALERG) is spacer peptide. Serine 222 (nucleophile) is an active-site residue.

This sequence belongs to the peptidase S45 family. As to quaternary structure, heterodimer of an alpha subunit and a beta subunit processed from the same precursor.

The protein localises to the periplasm. The catalysed reaction is an N-acyl-L-homoserine lactone + H2O = L-homoserine lactone + a carboxylate. In terms of biological role, catalyzes the deacylation of acyl-homoserine lactone (AHL or acyl-HSL), releasing homoserine lactone (HSL) and the corresponding fatty acid. Possesses a specificity for the degradation of long-chain acyl-HSLs (side chains of 11 to 14 carbons in length). This is Acyl-homoserine lactone acylase PvdQ (pvdQ) from Pseudomonas syringae pv. tomato (strain ATCC BAA-871 / DC3000).